We begin with the raw amino-acid sequence, 96 residues long: Large ribosomal subunit protein eL43 (96 aa).

Residues 41-62 (CPVCAFPKLKRVGTSIWVCDKC) form a C4-type zinc finger.

The protein belongs to the eukaryotic ribosomal protein eL43 family. The cofactor is Zn(2+).

In Methanococcus maripaludis (strain C6 / ATCC BAA-1332), this protein is Large ribosomal subunit protein eL43.